Reading from the N-terminus, the 426-residue chain is Tryptophan--tRNA ligase (426 aa).

The 'HIGH' region motif lies at P66–N74. The 'KMSKS' region motif lies at K314 to S318.

The protein belongs to the class-I aminoacyl-tRNA synthetase family.

It is found in the cytoplasm. The catalysed reaction is tRNA(Trp) + L-tryptophan + ATP = L-tryptophyl-tRNA(Trp) + AMP + diphosphate + H(+). This chain is Tryptophan--tRNA ligase, found in Thermoplasma acidophilum (strain ATCC 25905 / DSM 1728 / JCM 9062 / NBRC 15155 / AMRC-C165).